The following is a 178-amino-acid chain: Translation initiation factor IF-3 (178 aa).

It belongs to the IF-3 family. Monomer.

It is found in the cytoplasm. IF-3 binds to the 30S ribosomal subunit and shifts the equilibrium between 70S ribosomes and their 50S and 30S subunits in favor of the free subunits, thus enhancing the availability of 30S subunits on which protein synthesis initiation begins. The chain is Translation initiation factor IF-3 from Legionella pneumophila (strain Paris).